The sequence spans 141 residues: Hemoglobin subunit alpha-A (141 aa).

Residues 1 to 141 (VLSAADKTNV…VGTVLTAKYR (141 aa)) enclose the Globin domain. Residue H58 participates in O2 binding. H87 provides a ligand contact to heme b.

This sequence belongs to the globin family. In terms of assembly, heterotetramer of two alpha chains and two beta chains. As to expression, red blood cells.

Its function is as follows. Involved in oxygen transport from the lung to the various peripheral tissues. This Turdus merula (Common blackbird) protein is Hemoglobin subunit alpha-A (HBAA).